Consider the following 288-residue polypeptide: MDAELAEVRALQAEIAALRRACEDPPAPWEEKSRVQKSFQAIHQFNLEGWKSSKDLKNQLGHLESELSFLSTLTGINIRNHSKQTEDLTSTEMTEKSIRKVLQRHRLSGNCHMVTFQLEFQILEIQNKERLSSAVTDLNIIMEPTECSELSEFVSRAEERKDLFMFFRSLHFFVEWFEYRKRTFKHLKEKYPDAVYLSEGPSSCSMGIRSASRPGFELVIVWRIQIDEDGKVFPKLDLLTKVPQRALELDKNRAIETAPLSFRTLVGLLGIEAALESLIKSLCAEENN.

Residues 1–71 (MDAELAEVRA…HLESELSFLS (71 aa)) are a coiled coil. At Ser38 the chain carries Phosphoserine.

Belongs to the CENP-P/CTF19 family. As to quaternary structure, component of the CENPA-CAD complex, composed of CENPI, CENPK, CENPL, CENPO, CENPP, CENPQ, CENPR and CENPS. The CENPA-CAD complex interacts with the CENPA-NAC complex, at least composed of CENPA, CENPC, CENPH, CENPM, CENPN, CENPT and CENPU.

It is found in the nucleus. The protein localises to the chromosome. Its subcellular location is the centromere. Its function is as follows. Component of the CENPA-CAD (nucleosome distal) complex, a complex recruited to centromeres which is involved in assembly of kinetochore proteins, mitotic progression and chromosome segregation. May be involved in incorporation of newly synthesized CENPA into centromeres via its interaction with the CENPA-NAC complex. This Homo sapiens (Human) protein is Centromere protein P (CENPP).